The primary structure comprises 129 residues: Glycine cleavage system H protein (129 aa).

The Lipoyl-binding domain maps to 24–106; that stretch reads SVVVGVTQHA…YGAGWIVEIE (83 aa). Residue Lys-65 is modified to N6-lipoyllysine.

The protein belongs to the GcvH family. In terms of assembly, the glycine cleavage system is composed of four proteins: P, T, L and H. The cofactor is (R)-lipoate.

In terms of biological role, the glycine cleavage system catalyzes the degradation of glycine. The H protein shuttles the methylamine group of glycine from the P protein to the T protein. This chain is Glycine cleavage system H protein, found in Myxococcus xanthus (strain DK1622).